Reading from the N-terminus, the 430-residue chain is Glutamine synthetase leaf isozyme, chloroplastic (430 aa).

Residues M1 to V49 constitute a chloroplast transit peptide. The GS beta-grasp domain maps to I77–G157. Positions S99–G119 are disordered. Residues P161–V430 form the GS catalytic domain.

This sequence belongs to the glutamine synthetase family. Homooctamer.

It is found in the plastid. The protein resides in the chloroplast. It catalyses the reaction L-glutamate + NH4(+) + ATP = L-glutamine + ADP + phosphate + H(+). Its function is as follows. The light-modulated chloroplast enzyme, encoded by a nuclear gene and expressed primarily in leaves, is responsible for the reassimilation of the ammonia generated by photorespiration. The protein is Glutamine synthetase leaf isozyme, chloroplastic (GS2) of Pisum sativum (Garden pea).